Here is a 217-residue protein sequence, read N- to C-terminus: Uracil-DNA glycosylase (217 aa).

Aspartate 62 (proton acceptor) is an active-site residue.

It belongs to the uracil-DNA glycosylase (UDG) superfamily. UNG family.

It localises to the cytoplasm. It catalyses the reaction Hydrolyzes single-stranded DNA or mismatched double-stranded DNA and polynucleotides, releasing free uracil.. Functionally, excises uracil residues from the DNA which can arise as a result of misincorporation of dUMP residues by DNA polymerase or due to deamination of cytosine. This Streptococcus pneumoniae (strain Hungary19A-6) protein is Uracil-DNA glycosylase.